Consider the following 317-residue polypeptide: Aspartate carbamoyltransferase catalytic subunit (317 aa).

Residues Arg64 and Thr65 each contribute to the carbamoyl phosphate site. Lys92 serves as a coordination point for L-aspartate. Carbamoyl phosphate contacts are provided by Arg114, His144, and Gln147. L-aspartate is bound by residues Arg177 and Arg232. Residues Gly273 and Pro274 each contribute to the carbamoyl phosphate site.

This sequence belongs to the aspartate/ornithine carbamoyltransferase superfamily. ATCase family. Heterododecamer (2C3:3R2) of six catalytic PyrB chains organized as two trimers (C3), and six regulatory PyrI chains organized as three dimers (R2).

It catalyses the reaction carbamoyl phosphate + L-aspartate = N-carbamoyl-L-aspartate + phosphate + H(+). It participates in pyrimidine metabolism; UMP biosynthesis via de novo pathway; (S)-dihydroorotate from bicarbonate: step 2/3. Functionally, catalyzes the condensation of carbamoyl phosphate and aspartate to form carbamoyl aspartate and inorganic phosphate, the committed step in the de novo pyrimidine nucleotide biosynthesis pathway. This is Aspartate carbamoyltransferase catalytic subunit from Thiobacillus denitrificans (strain ATCC 25259 / T1).